The following is a 786-amino-acid chain: Receptor-interacting serine/threonine-protein kinase 4 (786 aa).

The Protein kinase domain occupies 22-286 (FAGWEKVGSG…QEITSETEDL (265 aa)). ATP-binding positions include 28-36 (VGSGGFGQV) and lysine 51. Residue lysine 51 forms a Glycyl lysine isopeptide (Lys-Gly) (interchain with G-Cter in ubiquitin) linkage. Aspartate 143 (proton acceptor) is an active-site residue. Lysine 145 participates in a covalent cross-link: Glycyl lysine isopeptide (Lys-Gly) (interchain with G-Cter in ubiquitin). Disordered regions lie at residues 293–328 (EVKD…APPF) and 347–378 (QTLE…GVSS). Basic and acidic residues predominate over residues 295-319 (KDLAHEPGEKSSLESKSEARPESSR). Over residues 357 to 378 (RSSSECKLPSSSSGKRLSGVSS) the composition is skewed to low complexity. 10 ANK repeats span residues 439–468 (SSAS…NPNL), 472–501 (KGST…SVNA), 505–534 (DQWT…SVNE), 538–567 (EGRT…DVGL), 571–601 (DAWL…SVNA), 605–634 (DGRT…DVNI), 638–667 (QAQT…GKEA), 671–700 (EGYT…DVMA), 704–734 (LNQT…DLSD), and 736–765 (QGLS…HINL).

The protein belongs to the protein kinase superfamily. TKL Ser/Thr protein kinase family. As to quaternary structure, interacts with PRKCB. Interacts with TRAF1, TRAF2, TRAF3 and TRAF5. Interacts with BIRC2/c-IAP1, BIRC3/c-IAP2 and XIAP/BIRC4. May be phosphorylated by MAP3K2 and MAP3K3. Post-translationally, proteolytically cleaved by during Fas-induced apoptosis. Cleavage at Asp-342 and Asp-380. In terms of processing, polyubiquitinated with 'Lys-48' and 'Lys-63'-linked chains by BIRC2/c-IAP1 and BIRC3/c-IAP2, leading to activation of NF-kappa-B. In terms of tissue distribution, expressed in the epidermis of the skin (at protein level). Ubiquitously expressed, with an abundant expression in the thymus, bone marrow, pro-B, pre-B and immature B cells and a weak expression in the spleen.

The protein resides in the cytoplasm. It localises to the membrane. It catalyses the reaction L-seryl-[protein] + ATP = O-phospho-L-seryl-[protein] + ADP + H(+). The enzyme catalyses L-threonyl-[protein] + ATP = O-phospho-L-threonyl-[protein] + ADP + H(+). Functionally, serine/threonine protein kinase. Required for embryonic skin development and correct skin homeostasis in adults, via phosphorylation of PKP1 and subsequent promotion of keratinocyte differentiation and cell adhesion. It is a direct transcriptional target of TP63. Plays a role in NF-kappa-B activation. The protein is Receptor-interacting serine/threonine-protein kinase 4 (Ripk4) of Mus musculus (Mouse).